We begin with the raw amino-acid sequence, 541 residues long: Serine/threonine-protein kinase akt-1 (541 aa).

The region spanning 15 to 118 is the PH domain; the sequence is DVVIEGWLHK…WIHAIESISK (104 aa). Positions 193–450 constitute a Protein kinase domain; sequence FDFLKVLGKG…ALEICRADFF (258 aa). Residues 199-207 and lysine 222 contribute to the ATP site; that span reads LGKGTFGKV. Catalysis depends on aspartate 316, which acts as the Proton acceptor. Threonine 350 is modified (phosphothreonine). Positions 451 to 528 constitute an AGC-kinase C-terminal domain; sequence RTVDWEATYR…HNVMGSINRI (78 aa). Serine 517 carries the post-translational modification Phosphoserine.

The protein belongs to the protein kinase superfamily. AGC Ser/Thr protein kinase family. RAC subfamily. Interacts with pdk-1, sgk-1, akt-2 and daf-16. Part of a complex containing sgk-1, akt-1 and akt-2. Interacts with cmd-1 in the presence of Ca(2+). Interacts with let-92 phosphatase regulatory subunit pptr-1. The cofactor is Mg(2+). As to expression, expressed in neurons, muscle cells of the pharynx, rectal gland cells, vulva and spermatheca.

It catalyses the reaction L-seryl-[protein] + ATP = O-phospho-L-seryl-[protein] + ADP + H(+). The catalysed reaction is L-threonyl-[protein] + ATP = O-phospho-L-threonyl-[protein] + ADP + H(+). Its activity is regulated as follows. Phosphorylated and activated by pdk-1. Acts downstream of PI3 kinase age-1 and kinase pdk-1 in the daf-2/insulin receptor-like transduction pathway. Phosphorylates Forkhead-related daf-16 and the longevity-promoting skn-1 transcription factors, which inhibits their entry into the nucleus and antagonizes their functions. Plays a role in maintaining the gonadal basement membrane through it's role in inhibiting daf-16 activity. Has an essential role in regulating developmental arrest at the dauer stage. Plays a role in immune function and pathogen resistance. Regulates salt chemotaxis learning. Downstream of age-1 and together with akt-2 and sgk-1, promotes cell survival during embryonic development. The chain is Serine/threonine-protein kinase akt-1 from Caenorhabditis elegans.